The chain runs to 512 residues: Endoglucanase 14 (512 aa).

The N-terminal stretch at methionine 1–glycine 22 is a signal peptide. Asparagine 76 carries N-linked (GlcNAc...) asparagine glycosylation. Aspartate 103 (nucleophile) is an active-site residue. N-linked (GlcNAc...) asparagine glycosylation is found at asparagine 192 and asparagine 215. Residues histidine 433, aspartate 484, and glutamate 493 contribute to the active site.

The protein belongs to the glycosyl hydrolase 9 (cellulase E) family.

Its subcellular location is the secreted. The catalysed reaction is Endohydrolysis of (1-&gt;4)-beta-D-glucosidic linkages in cellulose, lichenin and cereal beta-D-glucans.. This is Endoglucanase 14 from Oryza sativa subsp. japonica (Rice).